Consider the following 160-residue polypeptide: Nucleotide-binding protein VV1_2655 (160 aa).

The protein belongs to the YajQ family.

Nucleotide-binding protein. The chain is Nucleotide-binding protein VV1_2655 from Vibrio vulnificus (strain CMCP6).